A 239-amino-acid polypeptide reads, in one-letter code: Splicing factor U2AF 35 kDa subunit (239 aa).

Position 2 is an N-acetylalanine (Ala-2). Residues 12–40 (EKDKVNCSFYFKIGACRHGDRCSRLHNKP) form a C3H1-type 1 zinc finger. Lys-39 bears the N6-methyllysine mark. 2 positions are modified to phosphoserine: Ser-61 and Ser-145. In terms of domain architecture, RRM spans 65 to 147 (LRCAVSDVEM…QPIHAELSPV (83 aa)). The segment at 149-176 (DFREACCRQYEMGECTRGGFCNFMHLKP) adopts a C3H1-type 2 zinc-finger fold. Arg-165 is subject to Omega-N-methylarginine. Residues 183 to 239 (RELYGRRRKKHRSRSRSRERRSRSRDRGRGGGGGGGGGGGRERDRRRSRDRERSGRF) are disordered. Residues 188 to 208 (RRRKKHRSRSRSRERRSRSRD) show a composition bias toward basic residues. The segment covering 212 to 221 (GGGGGGGGGG) has biased composition (gly residues). The span at 222–239 (GRERDRRRSRDRERSGRF) shows a compositional bias: basic and acidic residues.

It belongs to the splicing factor SR family. As to quaternary structure, identified in the spliceosome C complex. Heterodimer with U2AF2. Interacts (via RS domain) with PHF5A (via N-terminus). Interacts with ZRANB2. Interacts with SDE2. Interacts with SF3B1. In terms of tissue distribution, expressed in primary spermatocytes and elongating spermatids (at protein level).

It localises to the nucleus. It is found in the nucleus speckle. In terms of biological role, plays a critical role in both constitutive and enhancer-dependent splicing by mediating protein-protein interactions and protein-RNA interactions required for accurate 3'-splice site selection. Recruits U2 snRNP to the branch point. Directly mediates interactions between U2AF2 and proteins bound to the enhancers and thus may function as a bridge between U2AF2 and the enhancer complex to recruit it to the adjacent intron. The chain is Splicing factor U2AF 35 kDa subunit (U2af1) from Mus musculus (Mouse).